The chain runs to 102 residues: Large ribosomal subunit protein bL21 (102 aa).

Belongs to the bacterial ribosomal protein bL21 family. As to quaternary structure, part of the 50S ribosomal subunit. Contacts protein L20.

This protein binds to 23S rRNA in the presence of protein L20. This Bacillus velezensis (strain DSM 23117 / BGSC 10A6 / LMG 26770 / FZB42) (Bacillus amyloliquefaciens subsp. plantarum) protein is Large ribosomal subunit protein bL21.